The sequence spans 743 residues: Homeobox-leucine zipper protein PROTODERMAL FACTOR 2 (743 aa).

Residues methionine 1–arginine 72 are disordered. A compositionally biased stretch (basic and acidic residues) spans serine 30–serine 39. Positions proline 60 to glutamine 71 are enriched in basic residues. The segment at residues lysine 62 to serine 121 is a DNA-binding region (homeobox). The stretch at phenylalanine 110–tyrosine 192 forms a coiled coil. Residues serine 244 to serine 476 enclose the START domain.

It belongs to the HD-ZIP homeobox family. Class IV subfamily. In terms of assembly, interacts with GAI/RGA2, RGA/RGA1/GRS, RGL2/SCL19 and ATML1. Binds to AIL7/PLT7, ANT, BBM and AIL1. Specifically expressed in the layer 1 (L1) of shoot meristems.

Its subcellular location is the nucleus. Functionally, probable transcription factor that binds to the L1 box DNA sequence 5'-TAAATG[CT]A-3'. Plays a role in maintaining the identity of L1 cells, possibly by interacting with their L1 box or other target-gene promoters; binds to the LIP1 gene promoter and stimulates its expression upon imbibition. Acts as a positive regulator of gibberellins (GAs)-regulated epidermal gene expression (e.g. LIP1, LIP2, LTP1, FDH and PDF1). Functionally redundant to ATML1. Involved, together with HDG proteins (e.g. HDG1, HDG2, HDG5 and HDG12), in the regulation of flower organs development by promoting the expression of APETALA 3 (AP3) in the epidermis and internal cell layers of developing flowers. Seems to promote cell differentiation. This chain is Homeobox-leucine zipper protein PROTODERMAL FACTOR 2, found in Arabidopsis thaliana (Mouse-ear cress).